The chain runs to 662 residues: Probable dolichyl-phosphate-mannose--protein mannosyltransferase 7 (662 aa).

Over 1-26 (MKDLRLQGPYRKYIPYNIFQQCGIGH) the chain is Lumenal. Residues 27 to 47 (LKTLDYIFAFLIVITNFTLIW) form a helical membrane-spanning segment. The Cytoplasmic segment spans residues 48-159 (KSHSSSFWNR…GTIISFDSLE (112 aa)). A helical transmembrane segment spans residues 160-180 (WCLFSVVIYSFISISIAKLGT). The Lumenal portion of the chain corresponds to 181-195 (TNWFANVITLSISLG). The chain crosses the membrane as a helical span at residues 196-216 (LAISSKFIGIVTWAFVILSFV). Over 217 to 235 (RQFDRLISDVKVTTIQIIK) the chain is Cytoplasmic. Residues 236 to 256 (FVILCLLFVLIIPGSIFIISY) traverse the membrane as a helical segment. Topologically, residues 257–482 (SNLLSNFKTD…MEYPVIPRTT (226 aa)) are lumenal. An MIR 1 domain is found at 289-344 (PSRLYYGSTITLRHLDSMVGYLASHDISYPSDVDEQLVALSFEEFAADNEWLIEHP). A glycan (N-linked (GlcNAc...) asparagine) is linked at N347. 2 MIR domains span residues 359–418 (LIPV…VLLI) and 432–488 (DKYI…IDSV). The chain crosses the membrane as a helical span at residues 483–503 (FLIDSVQLPVDFQVPMIEYYI). The Cytoplasmic portion of the chain corresponds to 504–565 (GKISSSAEFN…KWPITLDTDS (62 aa)). A helical membrane pass occupies residues 566-586 (PVWFNFAWYGSLLSMIIFMCV). The Lumenal portion of the chain corresponds to 587-617 (QCKRMISWNPWTTAEPSFSIKWEVYNEFGWE). Residues 618–638 (CIVGWFLHFYIFTMSPHFNLG) traverse the membrane as a helical segment. The Cytoplasmic portion of the chain corresponds to 639 to 662 (KKLYFQSFFFSVLCLLESLDCLAK).

Belongs to the glycosyltransferase 39 family.

The protein resides in the endoplasmic reticulum membrane. The enzyme catalyses a di-trans,poly-cis-dolichyl beta-D-mannosyl phosphate + L-seryl-[protein] = 3-O-(alpha-D-mannosyl)-L-seryl-[protein] + a di-trans,poly-cis-dolichyl phosphate + H(+). It catalyses the reaction a di-trans,poly-cis-dolichyl beta-D-mannosyl phosphate + L-threonyl-[protein] = 3-O-(alpha-D-mannosyl)-L-threonyl-[protein] + a di-trans,poly-cis-dolichyl phosphate + H(+). The protein operates within protein modification; protein glycosylation. Its function is as follows. Probable protein O-mannosyltransferase involved in O-glycosylation which is essential for cell wall rigidity. Transfers mannose from Dol-P-mannose to Ser or Thr residues on proteins. The chain is Probable dolichyl-phosphate-mannose--protein mannosyltransferase 7 from Saccharomyces cerevisiae (strain ATCC 204508 / S288c) (Baker's yeast).